The sequence spans 501 residues: Glycerol kinase (501 aa).

Position 14 (T14) interacts with ADP. ATP contacts are provided by T14, T15, and S16. T14 is a sn-glycerol 3-phosphate binding site. ADP is bound at residue R18. Sn-glycerol 3-phosphate contacts are provided by R84, E85, Y136, and D246. The glycerol site is built by R84, E85, Y136, D246, and Q247. ADP is bound by residues T268 and G311. Positions 268, 311, 315, and 412 each coordinate ATP. Residues G412 and N416 each contribute to the ADP site.

It belongs to the FGGY kinase family. In terms of assembly, homotetramer and homodimer (in equilibrium).

The enzyme catalyses glycerol + ATP = sn-glycerol 3-phosphate + ADP + H(+). The protein operates within polyol metabolism; glycerol degradation via glycerol kinase pathway; sn-glycerol 3-phosphate from glycerol: step 1/1. Activated by phosphorylation and inhibited by fructose 1,6-bisphosphate (FBP). In terms of biological role, key enzyme in the regulation of glycerol uptake and metabolism. Catalyzes the phosphorylation of glycerol to yield sn-glycerol 3-phosphate. This chain is Glycerol kinase, found in Desulforamulus reducens (strain ATCC BAA-1160 / DSM 100696 / MI-1) (Desulfotomaculum reducens).